A 94-amino-acid chain; its full sequence is UPF0213 protein BH0048 (94 aa).

In terms of domain architecture, GIY-YIG spans 1–76; the sequence is MNHYVYILEC…KHLSRRKKEQ (76 aa).

Belongs to the UPF0213 family.

The protein is UPF0213 protein BH0048 of Halalkalibacterium halodurans (strain ATCC BAA-125 / DSM 18197 / FERM 7344 / JCM 9153 / C-125) (Bacillus halodurans).